Reading from the N-terminus, the 199-residue chain is ORF1/1 protein (199 aa).

Residues 96–155 (ESDALTLSPVHRPKRPKRDTQVKEKTPEKDSDSAVQLRRLQPWIHSSQETKDEEEEIPEG) form a disordered region. The segment covering 113–127 (RDTQVKEKTPEKDSD) has biased composition (basic and acidic residues).

The chain is ORF1/1 protein from Torque teno virus (isolate Human/Finland/Hel32/2002) (TTV).